The sequence spans 174 residues: uncharacterized protein (174 aa).

Composition is skewed to basic and acidic residues over residues 1 to 31 (MDKHGVKTPLWKKETEELRAEDAEQEEGKEG) and 52 to 67 (EPPRVAEEGEGRERRS). Residues 1 to 69 (MDKHGVKTPL…GEGRERRSVS (69 aa)) are disordered.

This is an uncharacterized protein from Homo sapiens (Human).